Here is a 99-residue protein sequence, read N- to C-terminus: 10 kDa heat shock protein, mitochondrial (99 aa).

It belongs to the GroES chaperonin family. As to quaternary structure, homoheptamer arranged in a ring structure. 2 heptameric Hsp10 rings interact with a Hsp60 tetradecamer in the structure of a back-to-back double heptameric ring to form the symmetrical football complex.

The protein resides in the mitochondrion matrix. Its function is as follows. Co-chaperonin implicated in mitochondrial protein import and macromolecular assembly. Together with Hsp60, facilitates the correct folding of imported proteins. May also prevent misfolding and promote the refolding and proper assembly of unfolded polypeptides generated under stress conditions in the mitochondrial matrix. The functional units of these chaperonins consist of heptameric rings of the large subunit Hsp60, which function as a back-to-back double ring. In a cyclic reaction, Hsp60 ring complexes bind one unfolded substrate protein per ring, followed by the binding of ATP and association with 2 heptameric rings of the co-chaperonin Hsp10. This leads to sequestration of the substrate protein in the inner cavity of Hsp60 where, for a certain period of time, it can fold undisturbed by other cell components. Synchronous hydrolysis of ATP in all Hsp60 subunits results in the dissociation of the chaperonin rings and the release of ADP and the folded substrate protein. The protein is 10 kDa heat shock protein, mitochondrial (hspe1) of Oryzias latipes (Japanese rice fish).